The chain runs to 350 residues: Probable dTDP-glucose 4,6-dehydratase (350 aa).

Position 7-13 (7-13 (GGAGFIG)) interacts with NAD(+). Threonine 132 is a substrate binding site. Catalysis depends on aspartate 133, which acts as the Proton donor. Residues glutamate 134 and tyrosine 157 each act as proton acceptor in the active site.

Belongs to the NAD(P)-dependent epimerase/dehydratase family. dTDP-glucose dehydratase subfamily. NAD(+) is required as a cofactor.

The catalysed reaction is dTDP-alpha-D-glucose = dTDP-4-dehydro-6-deoxy-alpha-D-glucose + H2O. It participates in carbohydrate biosynthesis; dTDP-L-rhamnose biosynthesis. This is Probable dTDP-glucose 4,6-dehydratase from Sinorhizobium fredii (strain NBRC 101917 / NGR234).